Reading from the N-terminus, the 352-residue chain is Ion-translocating oxidoreductase complex subunit D (352 aa).

4 helical membrane-spanning segments follow: residues 20–40 (IMLLVLLAAVPGIAAQLCFFG), 42–62 (GTLVQILLASVSALLAEALVL), 89–109 (IPPLAPWWMVVLGTVFAVIIA), and 123–143 (PAMIGYVVLLISFPVQMTSWL). The residue at position 187 (Thr-187) is an FMN phosphoryl threonine. 5 helical membrane passes run 215 to 235 (LAGAGWQWVNLAWLAGGVWLL), 242 to 262 (WHIPLSFLVTLALCATLGWLF), 267 to 287 (LAAPQIHLLSGATMLGAFFIL), 301 to 321 (LIFGALAGLLVWLIRSFGGYP), and 322 to 342 (DGVAFAVLLANITVPLIDYYT).

This sequence belongs to the NqrB/RnfD family. As to quaternary structure, the complex is composed of six subunits: RsxA, RsxB, RsxC, RsxD, RsxE and RsxG. Requires FMN as cofactor.

The protein localises to the cell inner membrane. Functionally, part of a membrane-bound complex that couples electron transfer with translocation of ions across the membrane. Required to maintain the reduced state of SoxR. The protein is Ion-translocating oxidoreductase complex subunit D of Escherichia coli O7:K1 (strain IAI39 / ExPEC).